Consider the following 147-residue polypeptide: 3-dehydroquinate dehydratase (147 aa).

The Proton acceptor role is filled by Y23. Substrate contacts are provided by N75, H81, and D88. The active-site Proton donor is H101. Substrate contacts are provided by residues L102–S103 and R112.

This sequence belongs to the type-II 3-dehydroquinase family. In terms of assembly, homododecamer.

The catalysed reaction is 3-dehydroquinate = 3-dehydroshikimate + H2O. It participates in metabolic intermediate biosynthesis; chorismate biosynthesis; chorismate from D-erythrose 4-phosphate and phosphoenolpyruvate: step 3/7. Catalyzes a trans-dehydration via an enolate intermediate. In Stutzerimonas stutzeri (strain A1501) (Pseudomonas stutzeri), this protein is 3-dehydroquinate dehydratase.